The following is a 507-amino-acid chain: MSYETIPTSDENFDRDVSATNRNVFGWYLYAFSSEPFIVSAMSTYFPLLLEEFARNNGVQVDDHTVACGAEDKHCVLPLFGRRVFVDTSSFALYTFALGVLLQTVLVISVSGVVDVCKTVRFKRNVLLSFGMVGGLATCSTVLLRGNQYYILALLTVISNCCYGVINVVGNSLLPDVVSDLKRVLYLYRVIDSDQLTTVISGRGSGIGYIAAFVVQLCSVWLLRQPEYRDDIRVAVLLVGGWWMLFQLPLIWMLDDVVVRENSTQFKWSRSRQYLKAGWQSLGHAAMHANLLKDVLIFLVGWFIISDSITTINSAAILFSKTELHMSTVNLVVISILTMINAVIGAYFVPQLLSERLELPPHQSLIYLICWAGVIPFYGTLGFVFQSIGLKHPFEMYILAVWYGISMGGLAAVSRSVFSLLIPRGKESTFFSLFSITDKGSSVVGPLLIGLITDKTHNIRYSFYFLFLFVVASIPVFNALNVQRGKVEAEELAGINESRLETNDGFA.

The next 6 helical transmembrane spans lie at 24 to 44 (VFGWYLYAFSSEPFIVSAMST), 90 to 110 (SFALYTFALGVLLQTVLVISV), 126 to 146 (VLLSFGMVGGLATCSTVLLRG), 150 to 170 (YILALLTVISNCCYGVINVVG), 203 to 223 (RGSGIGYIAAFVVQLCSVWLL), and 234 to 254 (VAVLLVGGWWMLFQLPLIWML). N-linked (GlcNAc...) asparagine glycosylation occurs at Asn262. Helical transmembrane passes span 295 to 315 (VLIFLVGWFIISDSITTINSA), 329 to 349 (VNLVVISILTMINAVIGAYFV), 365 to 385 (LIYLICWAGVIPFYGTLGFVF), 393 to 413 (PFEMYILAVWYGISMGGLAAV), 433 to 453 (LFSITDKGSSVVGPLLIGLIT), and 462 to 482 (SFYFLFLFVVASIPVFNALNV). N-linked (GlcNAc...) asparagine glycosylation occurs at Asn496.

The protein belongs to the ATG22 family.

The protein localises to the vacuole membrane. Vacuolar effluxer which mediate the efflux of amino acids resulting from autophagic degradation. The release of autophagic amino acids allows the maintenance of protein synthesis and viability during nitrogen starvation. This Eremothecium gossypii (strain ATCC 10895 / CBS 109.51 / FGSC 9923 / NRRL Y-1056) (Yeast) protein is Autophagy-related protein 22 (ATG22).